Consider the following 305-residue polypeptide: UDP-3-O-acyl-N-acetylglucosamine deacetylase (305 aa).

Zn(2+)-binding residues include histidine 79, histidine 238, and aspartate 242. Catalysis depends on histidine 265, which acts as the Proton donor.

This sequence belongs to the LpxC family. Requires Zn(2+) as cofactor.

It catalyses the reaction a UDP-3-O-[(3R)-3-hydroxyacyl]-N-acetyl-alpha-D-glucosamine + H2O = a UDP-3-O-[(3R)-3-hydroxyacyl]-alpha-D-glucosamine + acetate. It participates in glycolipid biosynthesis; lipid IV(A) biosynthesis; lipid IV(A) from (3R)-3-hydroxytetradecanoyl-[acyl-carrier-protein] and UDP-N-acetyl-alpha-D-glucosamine: step 2/6. Catalyzes the hydrolysis of UDP-3-O-myristoyl-N-acetylglucosamine to form UDP-3-O-myristoylglucosamine and acetate, the committed step in lipid A biosynthesis. In Haemophilus influenzae (strain 86-028NP), this protein is UDP-3-O-acyl-N-acetylglucosamine deacetylase.